A 620-amino-acid polypeptide reads, in one-letter code: Arginine--tRNA ligase (620 aa).

The 'HIGH' region signature appears at 147–157 (ANPTGPIHIGG).

This sequence belongs to the class-I aminoacyl-tRNA synthetase family. As to quaternary structure, monomer.

The protein resides in the cytoplasm. It catalyses the reaction tRNA(Arg) + L-arginine + ATP = L-arginyl-tRNA(Arg) + AMP + diphosphate. The polypeptide is Arginine--tRNA ligase (Bifidobacterium longum (strain DJO10A)).